A 438-amino-acid chain; its full sequence is Protein maelstrom 2 (438 aa).

The HMG box DNA-binding region spans 2–69 (APKKRNGFMT…LERTAKKERL (68 aa)). A disordered region spans residues 374 to 438 (KEMGSRDLSP…NMGAGKKIAR (65 aa)). Polar residues predominate over residues 381–391 (LSPSSSHQSVS).

Belongs to the maelstrom family.

The protein resides in the cytoplasm. It is found in the nucleus. In terms of biological role, involved both in the piRNA and miRNA metabolic processes. As a component of the meiotic nuage, plays a central role during oogenesis by repressing transposable elements and preventing their mobilization, which is essential for the germline integrity. Repression of transposable elements is mediated via the piRNA metabolic process, which mediates the repression of transposable elements during meiosis by forming complexes composed of piRNAs and Piwi proteins and governs the repression of transposons. As a nuclear component, it is required for proper differentiation in the germline stem cell (GSC) lineage by repressing microRNA-7 (miR-7), thereby acting as an indirect regulator of bag-of-marbles (Bam). Acts by binding to the promoter of miR-7 gene and repressing its expression; miR-7 repression alleviates the Bam repression by miR-7, thereby allowing differentiation in the germline stem cell (GSC) lineage. The sequence is that of Protein maelstrom 2 (mael2) from Drosophila persimilis (Fruit fly).